We begin with the raw amino-acid sequence, 287 residues long: MLDEGYESRIIDGKVLAKKIEDEVRSGVEALVSGRGITPGLATVLVGDDPASKMYVRLKHRACERVGIQAEDHFLPAETSQEELISLINTLNKDQNVHGILLQLPLPKHLFPQEAMEAIAPEKDADGFHPYNMGKLMIGDEGLVPCTPHGVIRALEEYNVPVKGKNVVIVGHSNVVGKPLAAMFLNRNATVSVCHVFTDDLKKYTLDADILVVATGVKHLIKADMVKEGAVIFDVGITKEKDGVYGDVDFENVIKKAALITPVPGGVGPLTVAMLMKHVLGCAETNY.

NADP(+) contacts are provided by residues 171 to 173 (GHS) and I237.

It belongs to the tetrahydrofolate dehydrogenase/cyclohydrolase family. As to quaternary structure, homodimer.

The catalysed reaction is (6R)-5,10-methylene-5,6,7,8-tetrahydrofolate + NADP(+) = (6R)-5,10-methenyltetrahydrofolate + NADPH. It carries out the reaction (6R)-5,10-methenyltetrahydrofolate + H2O = (6R)-10-formyltetrahydrofolate + H(+). Its pathway is one-carbon metabolism; tetrahydrofolate interconversion. Functionally, catalyzes the oxidation of 5,10-methylenetetrahydrofolate to 5,10-methenyltetrahydrofolate and then the hydrolysis of 5,10-methenyltetrahydrofolate to 10-formyltetrahydrofolate. The sequence is that of Bifunctional protein FolD from Methanosarcina barkeri (strain Fusaro / DSM 804).